A 196-amino-acid chain; its full sequence is GTP cyclohydrolase-2 (196 aa).

49-53 serves as a coordination point for GTP; it reads RVHSE. Zn(2+) contacts are provided by C54, C65, and C67. GTP is bound by residues Q70, 92 to 94, and T114; that span reads EGR. D126 serves as the catalytic Proton acceptor. R128 acts as the Nucleophile in catalysis. The GTP site is built by T149 and K154.

This sequence belongs to the GTP cyclohydrolase II family. As to quaternary structure, homodimer. Requires Zn(2+) as cofactor.

It carries out the reaction GTP + 4 H2O = 2,5-diamino-6-hydroxy-4-(5-phosphoribosylamino)-pyrimidine + formate + 2 phosphate + 3 H(+). The protein operates within cofactor biosynthesis; riboflavin biosynthesis; 5-amino-6-(D-ribitylamino)uracil from GTP: step 1/4. Catalyzes the conversion of GTP to 2,5-diamino-6-ribosylamino-4(3H)-pyrimidinone 5'-phosphate (DARP), formate and pyrophosphate. The sequence is that of GTP cyclohydrolase-2 from Escherichia coli O45:K1 (strain S88 / ExPEC).